A 406-amino-acid polypeptide reads, in one-letter code: Tubby-like F-box protein 11 (406 aa).

An F-box domain is found at 53–108; sequence SCWTQLPPELLREVLARVEESEGWWPRRRDVVACAGVCRSWRGIVREIVRTPEASG.

It belongs to the TUB family. As to expression, ubiquitous.

The sequence is that of Tubby-like F-box protein 11 (TULP11) from Oryza sativa subsp. japonica (Rice).